Consider the following 374-residue polypeptide: tRNA (guanine(26)-N(2))-dimethyltransferase (374 aa).

The 368-residue stretch at 4-371 (IEIREGKASL…KEIDEIVNCI (368 aa)) folds into the Trm1 methyltransferase domain. S-adenosyl-L-methionine is bound by residues Arg-44, Arg-69, Asp-87, Asp-113, and Ala-114. Zn(2+)-binding residues include Cys-244, Cys-247, Cys-261, and Cys-264.

This sequence belongs to the class I-like SAM-binding methyltransferase superfamily. Trm1 family.

It catalyses the reaction guanosine(26) in tRNA + 2 S-adenosyl-L-methionine = N(2)-dimethylguanosine(26) in tRNA + 2 S-adenosyl-L-homocysteine + 2 H(+). In terms of biological role, dimethylates a single guanine residue at position 26 of a number of tRNAs using S-adenosyl-L-methionine as donor of the methyl groups. This is tRNA (guanine(26)-N(2))-dimethyltransferase from Sulfurisphaera tokodaii (strain DSM 16993 / JCM 10545 / NBRC 100140 / 7) (Sulfolobus tokodaii).